A 666-amino-acid polypeptide reads, in one-letter code: MVLLLFLVLFFVPESVVCQRPNPNGVEFNTSGNMYTSGSAYINNNGLIRLTNSTPQTTGQVFYNDQLRFKNSVNGTVSSFSTTFVFSIEFHNGIYGGYGIAFVICPTRDLSPTFPTTYLGLFNRSNMGDPKNHIVAVELDTKVDQQFEDKDANHVGIDINTLVSDTVALAGYYMDNGTFRSLLLNSGQPMQIWIEYDSKQKQINVTLHPLYVPKPKIPLLSLEKDLSPYLLELMYVGFTSTTGDLTASHYILGWTFKMNGTTPDIDPSRLPKIPRYNQPWIQSPNGILTISLTVSGVIILIILSLSLWLFLKRKKLLEVLEDWEVQFGPHRFAFKDLHIATKGFKDTEVLGKGGFGKVYKGTLPVSNVEIAVKMVSHDSRQGMREFIAEIATIGRLRHPNLVRLQGYCRHKGELYLVYDCMAKGSLDKFLYHQQTGNLDWSQRFKIIKDVASGLYYLHQQWVQVIIHRDIKPANILLDANMNAKLGDFGLAKLCDHGTDPQTSHVAGTLGYISPELSRTGKASTRSDVFAFGIVMLEIACGRKPILPRASQREMVLTDWVLECWENEDIMQVLDHKIGQEYVEEQAALVLKLGLFCSHPVAAIRPNMSSVIQLLDSVAQLPHNLLDIVQTREVHRGTEISGEAADSPESCSIAPLTFTESFVSHGR.

Residues 1-18 (MVLLLFLVLFFVPESVVC) form the signal peptide. Residues 19-289 (QRPNPNGVEF…WIQSPNGILT (271 aa)) lie on the Extracellular side of the membrane. The tract at residues 27 to 257 (EFNTSGNMYT…SHYILGWTFK (231 aa)) is legume-lectin like. Residues asparagine 29, asparagine 74, asparagine 123, asparagine 176, asparagine 204, and asparagine 259 are each glycosylated (N-linked (GlcNAc...) asparagine). The chain crosses the membrane as a helical span at residues 290 to 310 (ISLTVSGVIILIILSLSLWLF). The Cytoplasmic portion of the chain corresponds to 311-666 (LKRKKLLEVL…FTESFVSHGR (356 aa)). The region spanning 344 to 625 (FKDTEVLGKG…SVAQLPHNLL (282 aa)) is the Protein kinase domain. ATP contacts are provided by residues 350-358 (LGKGGFGKV) and lysine 373. Residue aspartate 469 is the Proton acceptor of the active site.

The protein in the C-terminal section; belongs to the protein kinase superfamily. Ser/Thr protein kinase family. It in the N-terminal section; belongs to the leguminous lectin family.

It is found in the cell membrane. The catalysed reaction is L-seryl-[protein] + ATP = O-phospho-L-seryl-[protein] + ADP + H(+). The enzyme catalyses L-threonyl-[protein] + ATP = O-phospho-L-threonyl-[protein] + ADP + H(+). In Arabidopsis thaliana (Mouse-ear cress), this protein is Putative L-type lectin-domain containing receptor kinase V.1 (LECRK51).